Consider the following 305-residue polypeptide: Acetylglutamate kinase (305 aa).

Substrate contacts are provided by residues 67-68, R89, and N190; that span reads GG.

It belongs to the acetylglutamate kinase family. ArgB subfamily.

The protein localises to the cytoplasm. It catalyses the reaction N-acetyl-L-glutamate + ATP = N-acetyl-L-glutamyl 5-phosphate + ADP. Its pathway is amino-acid biosynthesis; L-arginine biosynthesis; N(2)-acetyl-L-ornithine from L-glutamate: step 2/4. Functionally, catalyzes the ATP-dependent phosphorylation of N-acetyl-L-glutamate. This chain is Acetylglutamate kinase, found in Bifidobacterium longum subsp. infantis (strain ATCC 15697 / DSM 20088 / JCM 1222 / NCTC 11817 / S12).